Consider the following 57-residue polypeptide: Kunitz-type serine protease inhibitor homolog delta-dendrotoxin (57 aa).

A BPTI/Kunitz inhibitor domain is found at 5–55; that stretch reads CKLPVRYGPCKKKIPSFYYKWKAKQCLPFDYSGCGGNANRFKTIEECRRTC. 3 disulfide bridges follow: C5–C55, C14–C38, and C30–C51.

The protein belongs to the venom Kunitz-type family. As to expression, expressed by the venom gland.

It localises to the secreted. Serine protease inhibitor homolog that blocks voltage-gated potassium channels (Kv). The polypeptide is Kunitz-type serine protease inhibitor homolog delta-dendrotoxin (Dendroaspis angusticeps (Eastern green mamba)).